The chain runs to 91 residues: Small ribosomal subunit protein uS15 (91 aa).

The protein belongs to the universal ribosomal protein uS15 family. Part of the 30S ribosomal subunit. Forms a bridge to the 50S subunit in the 70S ribosome, contacting the 23S rRNA.

Functionally, one of the primary rRNA binding proteins, it binds directly to 16S rRNA where it helps nucleate assembly of the platform of the 30S subunit by binding and bridging several RNA helices of the 16S rRNA. Forms an intersubunit bridge (bridge B4) with the 23S rRNA of the 50S subunit in the ribosome. The sequence is that of Small ribosomal subunit protein uS15 from Nautilia profundicola (strain ATCC BAA-1463 / DSM 18972 / AmH).